Reading from the N-terminus, the 509-residue chain is Maturase K (509 aa).

This sequence belongs to the intron maturase 2 family. MatK subfamily.

Its subcellular location is the plastid. It localises to the chloroplast. Functionally, usually encoded in the trnK tRNA gene intron. Probably assists in splicing its own and other chloroplast group II introns. This Thujopsis dolabrata (Hiba arborvitae) protein is Maturase K.